A 314-amino-acid polypeptide reads, in one-letter code: Nucleoprotein (314 aa).

Position 1 is an N-acetylmethionine; by host (Met-1). Tyr-38, Tyr-41, Arg-118, Lys-237, and Ser-266 together coordinate RNA.

This sequence belongs to the tenuiviruses nucleocapsid protein family.

The protein resides in the virion. Its subcellular location is the host cytoplasm. Encapsidates the genome, protecting it from nucleases. The encapsidated genomic RNA is termed the nucleocapsid (NC), and serves as template for viral transcription and replication. This chain is Nucleoprotein, found in Wheat yellow head virus (WYHV).